Here is a 391-residue protein sequence, read N- to C-terminus: Mycofactocin maturase MftC (391 aa).

The region spanning 16–232 (LDAPICLTWE…KGERVLTGDS (217 aa)) is the Radical SAM core domain. [4Fe-4S] cluster contacts are provided by C30, C34, C37, C251, C258, C269, C310, C313, C319, C323, and C341. The segment at 340–391 (ECVQGHSEPALARERHLPRPRADHSRGRRVSKPVPLTLSMRPPKRPCNESPV) is disordered. Over residues 350 to 364 (LARERHLPRPRADHS) the composition is skewed to basic and acidic residues.

This sequence belongs to the radical SAM superfamily. [4Fe-4S] cluster is required as a cofactor.

The enzyme catalyses [mycofactocin precursor peptide]-C-terminal glycyl-L-valyl-L-tyrosine + S-adenosyl-L-methionine = [mycofactocin precursor peptide]-C-terminal glycyl-N-{[2-(4-hydroxyphenyl)ethenyl]-3-methylbutanamide} + 5'-deoxyadenosine + L-methionine + CO2. The catalysed reaction is [mycofactocin precursor peptide]-C-terminal glycyl-N-{[2-(4-hydroxyphenyl)ethenyl]-3-methylbutanamide} + AH2 + S-adenosyl-L-methionine = [mycofactocin precursor peptide]-C-terminal glycyl-N-{5-[(4-hydroxyphenyl)methyl]-4,4-dimethyl-2-oxopyrrolidin-3-yl}acetamide + 5'-deoxyadenosine + L-methionine + A + H(+). Its function is as follows. Radical S-adenosylmethionine (SAM) enzyme responsible for the first step of the biosynthesis of the enzyme cofactor mycofactocin (MFT). Catalyzes two reactions at the C-terminus of the mycofactocin precursor (the MftA peptide). The first one is the oxidative decarboxylation of the C-terminal L-tyrosine of MftA, forming an unsaturated tyramine moiety. The second reaction is the cross-linking of the tyramine with the penultimate L-valine residue, forming a five-membered lactam ring. Its activity requires the presence of the MftB chaperone. The chain is Mycofactocin maturase MftC (mftC) from Mycobacterium tuberculosis (strain CDC 1551 / Oshkosh).